Consider the following 260-residue polypeptide: Type III pantothenate kinase (260 aa).

An ATP-binding site is contributed by 6–13 (DSGNTNIV). Position 108–111 (108–111 (GADR)) interacts with substrate. Asp-110 serves as the catalytic Proton acceptor. A K(+)-binding site is contributed by Asp-130. Thr-133 is an ATP binding site. Thr-185 serves as a coordination point for substrate.

Belongs to the type III pantothenate kinase family. As to quaternary structure, homodimer. NH4(+) is required as a cofactor. It depends on K(+) as a cofactor.

It is found in the cytoplasm. It catalyses the reaction (R)-pantothenate + ATP = (R)-4'-phosphopantothenate + ADP + H(+). Its pathway is cofactor biosynthesis; coenzyme A biosynthesis; CoA from (R)-pantothenate: step 1/5. In terms of biological role, catalyzes the phosphorylation of pantothenate (Pan), the first step in CoA biosynthesis. The sequence is that of Type III pantothenate kinase from Paramagnetospirillum magneticum (strain ATCC 700264 / AMB-1) (Magnetospirillum magneticum).